A 1183-amino-acid polypeptide reads, in one-letter code: Protein deacetylase HDAC6 (1183 aa).

Residues 1–61 (MTSTGQDSST…KGKMKKLSQP (61 aa)) form a disordered region. Residues 18–29 (NPQSPLQDSSAT) are compositionally biased toward polar residues. S21 is subject to Phosphoserine. Residue R32 is modified to Omega-N-methylarginine. The short motif at 66–75 (LIVGLQGLDL) is the Nuclear export signal element. Histone deacetylase regions lie at residues 86 to 434 (GLVF…TLLG) and 512 to 830 (GLVY…SLLG). H215 functions as the 1 in the catalytic mechanism. H641 acts as the 2 in catalysis. Residues 972–1042 (ATENSANQTT…EAQEVQESEE (71 aa)) are disordered. Low complexity predominate over residues 980–996 (TTSGEEASGETESFGTS). Phosphothreonine occurs at positions 990, 995, and 1005. The segment covering 997–1008 (PSSNASKQTTGA) has biased composition (polar residues). S1009 carries the phosphoserine modification. Residues 1021-1035 (ELGLSSTLELSSEAQ) show a composition bias toward low complexity. The segment at 1079 to 1177 (SWCPHLMAVC…NAAHQNKFGE (99 aa)) adopts a UBP-type zinc-finger fold. Zn(2+) is bound by residues C1081, H1083, C1101, C1104, C1113, C1116, and C1121. The segment at 1122–1124 (SRY) is ubiquitin binding. H1128, H1132, H1138, C1151, and C1154 together coordinate Zn(2+). The ubiquitin binding stretch occupies residues 1150-1157 (WCYLCQAY).

The protein belongs to the histone deacetylase family. HD type 2 subfamily. As to quaternary structure, forms a trimeric complex in the nucleus consisting of BANP, HDAC6 and KHDRBS1/SAM68; HDAC6 keeps KHDRBS1 in a deacetylated state which inhibits the inclusion of CD44 alternate exons. The complex is disrupted by MAPK1/MAPK3-mediated phosphorylation of BANP which results in BANP export to the cytoplasm. This facilitates acetylation of KHDRBS1 and CD44 variant exon inclusion. Interacts with SIRT2 (via both phosphorylated, unphosphorylated, active or inactive forms); the interaction is necessary for the complex to interact with alpha-tubulin. Under proteasome impairment conditions, interacts with UBD via its histone deacetylase 1 and UBP-type zinc-finger regions. Interacts with BBIP1, CBFA2T3, CYLD, DDIT3/CHOP, ZMYND15, F-actin and HDAC11. Interacts with RIPOR2; this interaction occurs during early myogenic differentiation and prevents HDAC6 to deacetylate tubulin. Interacts with AURKA; AURKA-mediated phosphorylation of HDAC6 promotes deacetylation of alpha-tubulin. Interacts with DYSF; this interaction occurs during early myogenic differentiation. Interacts with TPPP; inhibiting the tubulin deacetylase activity of HDAC6. Interacts with DYNLL1. Interacts with ATP13A2; the interaction results in recruitment of HDAC6 to lysosomes to promote CTTN deacetylation. Interacts with CCDC141 (via the N-terminal region); inhibiting the deacetylase activity of HDAC6. Interacts with IPO7; the interaction facilitates HDAC6 nuclear translocation in dental papilla cells. It depends on Zn(2+) as a cofactor. Phosphorylated by AURKA; phosphorylation increases HDAC6-mediated deacetylation of alpha-tubulin and subsequent disassembly of cilia. In terms of processing, ubiquitinated. Its polyubiquitination however does not lead to its degradation. Post-translationally, sumoylated in vitro.

It is found in the cytoplasm. The protein localises to the cytoskeleton. The protein resides in the nucleus. It localises to the perikaryon. Its subcellular location is the cell projection. It is found in the dendrite. The protein localises to the axon. The protein resides in the cilium. It localises to the microtubule organizing center. Its subcellular location is the centrosome. It is found in the cilium basal body. It carries out the reaction N(6)-acetyl-L-lysyl-[protein] + H2O = L-lysyl-[protein] + acetate. The catalysed reaction is N(6)-acetyl-L-lysyl-[alpha-tubulin] + H2O = L-lysyl-[alpha-tubulin] + acetate. Its pathway is protein modification; protein ubiquitination. Its function is as follows. Deacetylates a wide range of non-histone substrates. Plays a central role in microtubule-dependent cell motility by mediating deacetylation of tubulin. Required for cilia disassembly via deacetylation of alpha-tubulin. Alpha-tubulin deacetylation results in destabilization of dynamic microtubules. Promotes deacetylation of CTTN, leading to actin polymerization, promotion of autophagosome-lysosome fusion and completion of autophagy. Deacetylates SQSTM1. Deacetylates peroxiredoxins PRDX1 and PRDX2, decreasing their reducing activity. Deacetylates antiviral protein RIGI in the presence of viral mRNAs which is required for viral RNA detection by RIGI. Sequentially deacetylates and polyubiquitinates DNA mismatch repair protein MSH2 which leads to MSH2 degradation, reducing cellular sensitivity to DNA-damaging agents and decreasing cellular DNA mismatch repair activities. Deacetylates DNA mismatch repair protein MLH1 which prevents recruitment of the MutL alpha complex (formed by the MLH1-PMS2 heterodimer) to the MutS alpha complex (formed by the MSH2-MSH6 heterodimer), leading to tolerance of DNA damage. Deacetylates RHOT1/MIRO1 which blocks mitochondrial transport and mediates axon growth inhibition. Deacetylates transcription factor SP1 which leads to increased expression of ENG, positively regulating angiogenesis. Deacetylates KHDRBS1/SAM68 which regulates alternative splicing by inhibiting the inclusion of CD44 alternate exons. Promotes odontoblast differentiation following IPO7-mediated nuclear import and subsequent repression of RUNX2 expression. In addition to its protein deacetylase activity, plays a key role in the degradation of misfolded proteins: when misfolded proteins are too abundant to be degraded by the chaperone refolding system and the ubiquitin-proteasome, mediates the transport of misfolded proteins to a cytoplasmic juxtanuclear structure called aggresome. Probably acts as an adapter that recognizes polyubiquitinated misfolded proteins and targets them to the aggresome, facilitating their clearance by autophagy. The polypeptide is Protein deacetylase HDAC6 (Rattus norvegicus (Rat)).